We begin with the raw amino-acid sequence, 298 residues long: GTP cyclohydrolase FolE2 (298 aa).

It belongs to the GTP cyclohydrolase IV family.

The enzyme catalyses GTP + H2O = 7,8-dihydroneopterin 3'-triphosphate + formate + H(+). It participates in cofactor biosynthesis; 7,8-dihydroneopterin triphosphate biosynthesis; 7,8-dihydroneopterin triphosphate from GTP: step 1/1. In terms of biological role, converts GTP to 7,8-dihydroneopterin triphosphate. This chain is GTP cyclohydrolase FolE2, found in Neisseria meningitidis serogroup C (strain 053442).